A 2642-amino-acid polypeptide reads, in one-letter code: Fusarielin synthase FSL1 (2642 aa).

In terms of domain architecture, Ketosynthase family 3 (KS3) spans 6 to 450 (NEPIAIIGTG…GTNAHAILEA (445 aa)). Active-site for beta-ketoacyl synthase activity residues include Cys179, His318, and His370. A malonyl-CoA:ACP transacylase (MAT) domain region spans residues 566–890 (VFTGQGAQWA…PYTSALVRGK (325 aa)). Ser659 serves as the catalytic For malonyltransferase activity. The N-terminal hotdog fold stretch occupies residues 965-1101 (HDLLGIQTAD…GKVCIFLQTE (137 aa)). The interval 965-1279 (HDLLGIQTAD…SFSPFAAATD (315 aa)) is dehydratase (DH) domain. A PKS/mFAS DH domain is found at 965–1280 (HDLLGIQTAD…FSPFAAATDR (316 aa)). His997 (proton acceptor; for dehydratase activity) is an active-site residue. Residues 1126–1280 (MAGIDVERFY…FSPFAAATDR (155 aa)) form a C-terminal hotdog fold region. Asp1189 acts as the Proton donor; for dehydratase activity in catalysis. The tract at residues 1423-1622 (NYLDRYYTHA…GVDTNTPMPD (200 aa)) is methyltransferase (MET) domain. The segment at 2244 to 2423 (TYWMLGLTGD…GHNAAVIDIS (180 aa)) is ketoreductase (KR) domain. Residues 2556–2635 (QEVTSVLTSC…DLADYILESL (80 aa)) form the Carrier domain. Ser2595 carries the post-translational modification O-(pantetheine 4'-phosphoryl)serine.

Pantetheine 4'-phosphate is required as a cofactor.

It functions in the pathway secondary metabolite biosynthesis. Functionally, reducing polyketide synthase; part of the gene cluster that mediates the biosynthesis of fusarielins F, G and H, decaketide compounds with 5 methylations and a decaline core that act as mycoestrogens as they stimulate growth of MCF-7 breast cancer cells. The initial compound in the pathway is produced by the reducing polyketide synthase FSL1. FSL1 lacks an active enoyl reductase (ER) domain and biosynthesis of fusarielins relies on the trans-acting enoyl reductase FSL5, before it is released through hydrolysis catalyzed by the thioesterase FSL2. Fusarielins F, G, and H have a C11=C12 cis double bond and is fully reduced between C10 and C11 and between C12 and C13. FSL3 can be involved in the formation of the C11=C12 cis double bond by moving a hypothetical C10=C11 or C12=C13 trans double bond to form prefusarielin. Prefusarielin is oxygenated at C15 and C16 by the cytochrome P450 monooxygenase FSL4, resulting in fusarielin F, which subsequently is epoxidized into fusarielin G by the same enzyme. The final step in the pathway is a reduction of the carboxylic acid moiety to yield fusarielin H via a still undetermined mechanism. This is Fusarielin synthase FSL1 from Gibberella zeae (strain ATCC MYA-4620 / CBS 123657 / FGSC 9075 / NRRL 31084 / PH-1) (Wheat head blight fungus).